The chain runs to 408 residues: NADH-quinone oxidoreductase subunit D (408 aa).

Belongs to the complex I 49 kDa subunit family. In terms of assembly, NDH-1 is composed of 14 different subunits. Subunits NuoB, C, D, E, F, and G constitute the peripheral sector of the complex.

The protein resides in the cell inner membrane. It carries out the reaction a quinone + NADH + 5 H(+)(in) = a quinol + NAD(+) + 4 H(+)(out). Functionally, NDH-1 shuttles electrons from NADH, via FMN and iron-sulfur (Fe-S) centers, to quinones in the respiratory chain. The immediate electron acceptor for the enzyme in this species is believed to be ubiquinone. Couples the redox reaction to proton translocation (for every two electrons transferred, four hydrogen ions are translocated across the cytoplasmic membrane), and thus conserves the redox energy in a proton gradient. This chain is NADH-quinone oxidoreductase subunit D, found in Wolinella succinogenes (strain ATCC 29543 / DSM 1740 / CCUG 13145 / JCM 31913 / LMG 7466 / NCTC 11488 / FDC 602W) (Vibrio succinogenes).